Reading from the N-terminus, the 545-residue chain is Chaperonin GroEL (545 aa).

Residues 30 to 33, Lys51, 87 to 91, Gly415, and Asp496 each bind ATP; these read TLGP and DGTTT.

Belongs to the chaperonin (HSP60) family. In terms of assembly, forms a cylinder of 14 subunits composed of two heptameric rings stacked back-to-back. Interacts with the co-chaperonin GroES.

It is found in the cytoplasm. It carries out the reaction ATP + H2O + a folded polypeptide = ADP + phosphate + an unfolded polypeptide.. Its function is as follows. Together with its co-chaperonin GroES, plays an essential role in assisting protein folding. The GroEL-GroES system forms a nano-cage that allows encapsulation of the non-native substrate proteins and provides a physical environment optimized to promote and accelerate protein folding. The chain is Chaperonin GroEL from Chlorobaculum tepidum (strain ATCC 49652 / DSM 12025 / NBRC 103806 / TLS) (Chlorobium tepidum).